We begin with the raw amino-acid sequence, 218 residues long: Thiopurine S-methyltransferase (218 aa).

Trp10, Leu45, Glu66, and Arg123 together coordinate S-adenosyl-L-methionine.

This sequence belongs to the class I-like SAM-binding methyltransferase superfamily. TPMT family.

Its subcellular location is the cytoplasm. It carries out the reaction S-adenosyl-L-methionine + a thiopurine = S-adenosyl-L-homocysteine + a thiopurine S-methylether.. This is Thiopurine S-methyltransferase from Shewanella oneidensis (strain ATCC 700550 / JCM 31522 / CIP 106686 / LMG 19005 / NCIMB 14063 / MR-1).